The primary structure comprises 154 residues: Endoribonuclease YbeY (154 aa).

3 residues coordinate Zn(2+): His-113, His-117, and His-123.

The protein belongs to the endoribonuclease YbeY family. Requires Zn(2+) as cofactor.

The protein resides in the cytoplasm. Its function is as follows. Single strand-specific metallo-endoribonuclease involved in late-stage 70S ribosome quality control and in maturation of the 3' terminus of the 16S rRNA. In Aeromonas salmonicida (strain A449), this protein is Endoribonuclease YbeY.